Here is a 369-residue protein sequence, read N- to C-terminus: Glutamate 5-kinase (369 aa).

Lys-11 is an ATP binding site. The substrate site is built by Ser-51, Asp-138, and Asn-150. ATP is bound by residues 170–171 and 212–218; these read TD and TGGMATK. Residues 277 to 355 form the PUA domain; that stretch reads KGSIVIDEGA…QDIYAVLGYE (79 aa).

It belongs to the glutamate 5-kinase family.

The protein resides in the cytoplasm. It catalyses the reaction L-glutamate + ATP = L-glutamyl 5-phosphate + ADP. It participates in amino-acid biosynthesis; L-proline biosynthesis; L-glutamate 5-semialdehyde from L-glutamate: step 1/2. Its function is as follows. Catalyzes the transfer of a phosphate group to glutamate to form L-glutamate 5-phosphate. This Aliivibrio fischeri (strain ATCC 700601 / ES114) (Vibrio fischeri) protein is Glutamate 5-kinase.